The primary structure comprises 284 residues: uncharacterized protein (284 aa).

The signal sequence occupies residues 1 to 24; it reads MLYSRESRTTVLFLALVTSLTVLC. Residues 25-84 lie on the Cytoplasmic side of the membrane; sequence HSVDVTTVFTTSTITEITTVTAAPQPQNKAETALNTATNIIQTMQFLFNCAPFKWKGPLK. The helical transmembrane segment at 85 to 104 threads the bilayer; the sequence is ITSCALNFIVLLLTAWGYLL. Residues 105–284 lie on the Extracellular side of the membrane; it reads KYLQENKLNS…SVHMYSSSLL (180 aa). An N-linked (GlcNAc...) asparagine glycan is attached at Asn-270.

To yeast YNL019c.

The protein localises to the cell membrane. This is an uncharacterized protein from Saccharomyces cerevisiae (strain ATCC 204508 / S288c) (Baker's yeast).